A 250-amino-acid chain; its full sequence is 3-deoxy-manno-octulosonate cytidylyltransferase (250 aa).

It belongs to the KdsB family.

It is found in the cytoplasm. It carries out the reaction 3-deoxy-alpha-D-manno-oct-2-ulosonate + CTP = CMP-3-deoxy-beta-D-manno-octulosonate + diphosphate. It participates in nucleotide-sugar biosynthesis; CMP-3-deoxy-D-manno-octulosonate biosynthesis; CMP-3-deoxy-D-manno-octulosonate from 3-deoxy-D-manno-octulosonate and CTP: step 1/1. Its pathway is bacterial outer membrane biogenesis; lipopolysaccharide biosynthesis. Its function is as follows. Activates KDO (a required 8-carbon sugar) for incorporation into bacterial lipopolysaccharide in Gram-negative bacteria. The protein is 3-deoxy-manno-octulosonate cytidylyltransferase of Actinobacillus pleuropneumoniae serotype 7 (strain AP76).